Here is a 121-residue protein sequence, read N- to C-terminus: Probable K(+)/H(+) antiporter subunit G (121 aa).

Transmembrane regions (helical) follow at residues 10–32, 45–67, and 72–94; these read WAAL…GSLG, APTI…CFAV, and WVFH…LMLL.

The protein belongs to the CPA3 antiporters (TC 2.A.63) subunit G family. In terms of assembly, may form a hetero-oligomeric complex that consists of six subunits: PhaAB, PhaC, PhaD, PhaE, PhaF and PhaG.

Its subcellular location is the cell membrane. Functionally, part of a K(+) efflux system which is required for the adaptation of R.meliloti to alkaline pH as well as for the infection process during symbiotic nodule development. The sequence is that of Probable K(+)/H(+) antiporter subunit G (phaG) from Rhizobium meliloti (strain 1021) (Ensifer meliloti).